The following is a 643-amino-acid chain: Phosphomethylpyrimidine synthase (643 aa).

Residues asparagine 248, methionine 277, tyrosine 306, histidine 342, 362–364 (SRG), 403–406 (DGLR), and glutamate 442 each bind substrate. Histidine 446 provides a ligand contact to Zn(2+). Position 469 (tyrosine 469) interacts with substrate. Histidine 510 serves as a coordination point for Zn(2+). The [4Fe-4S] cluster site is built by cysteine 590, cysteine 593, and cysteine 598.

The protein belongs to the ThiC family. Homodimer. It depends on [4Fe-4S] cluster as a cofactor.

It carries out the reaction 5-amino-1-(5-phospho-beta-D-ribosyl)imidazole + S-adenosyl-L-methionine = 4-amino-2-methyl-5-(phosphooxymethyl)pyrimidine + CO + 5'-deoxyadenosine + formate + L-methionine + 3 H(+). It participates in cofactor biosynthesis; thiamine diphosphate biosynthesis. Catalyzes the synthesis of the hydroxymethylpyrimidine phosphate (HMP-P) moiety of thiamine from aminoimidazole ribotide (AIR) in a radical S-adenosyl-L-methionine (SAM)-dependent reaction. The polypeptide is Phosphomethylpyrimidine synthase (Paraburkholderia phymatum (strain DSM 17167 / CIP 108236 / LMG 21445 / STM815) (Burkholderia phymatum)).